The sequence spans 861 residues: Integrator complex subunit 6-like (861 aa).

In terms of domain architecture, VWFA spans 3-227 (ILLFLIDTSA…QCLESLVQKV (225 aa)). Positions 605 to 626 (PQNKVKRPGEPNSPMSSKRRRS) are disordered. Phosphoserine is present on S617.

This Homo sapiens (Human) protein is Integrator complex subunit 6-like (INTS6L).